A 423-amino-acid chain; its full sequence is Gamma-glutamyl phosphate reductase (423 aa).

The protein belongs to the gamma-glutamyl phosphate reductase family.

It localises to the cytoplasm. The enzyme catalyses L-glutamate 5-semialdehyde + phosphate + NADP(+) = L-glutamyl 5-phosphate + NADPH + H(+). Its pathway is amino-acid biosynthesis; L-proline biosynthesis; L-glutamate 5-semialdehyde from L-glutamate: step 2/2. Catalyzes the NADPH-dependent reduction of L-glutamate 5-phosphate into L-glutamate 5-semialdehyde and phosphate. The product spontaneously undergoes cyclization to form 1-pyrroline-5-carboxylate. This is Gamma-glutamyl phosphate reductase from Magnetococcus marinus (strain ATCC BAA-1437 / JCM 17883 / MC-1).